Consider the following 377-residue polypeptide: Mitochondrial pyrimidine nucleotide transporter RIM2 (377 aa).

3 Solcar repeats span residues 50-163 (VKPW…TKDM), 173-262 (ETPM…MKRL), and 286-375 (KEWC…VIRL). 6 helical membrane-spanning segments follow: residues 53–73 (WVHFVAGGIGGMAGAVVTCPF), 131–151 (GFRSLFKGLGPNLVGVIPARS), 179–199 (LMAAATAGWATATATNPIWLI), 238–258 (GLSASYLGSVEGILQWLLYEQ), 286–306 (KEWCQRSGSAGLAKFVASIAT), and 347–368 (MYSGLTPHLMRTVPNSIIMFGT).

This sequence belongs to the mitochondrial carrier (TC 2.A.29) family.

The protein resides in the mitochondrion inner membrane. It carries out the reaction 5-methyl-UTP(out) + UTP(in) = 5-methyl-UTP(in) + UTP(out). Its function is as follows. Mitochondrial transporter that imports/exports pyrimidine nucleotides into and from mitochondria. Selectively transports uridine, thymidine, and cytosine (deoxy)nucleoside di- and triphosphates by an antiport mechanism. Also transports, with lower efficiency, uridine, thymidine, and cytosine (deoxy)nucleoside monophosphates as well as guanosine (deoxy)nucleoside di- and triphosphate. May import (deoxy)nucleoside triphosphates in exchange for intramitochondrial (deoxy)nucleoside monophosphates, thus providing precursors necessary for de novo synthesis of mitochondrial DNA and RNA while exporting products of their catabolism. Mediates the transport of iron and other divalent metal ions like copper and zinc across the mitochondrial inner membrane in a pyrimidine nucleotide-dependent fashion. Catalyzes the co-import of pyrimidine nucleotides and divalent metal ions including ferrous iron. Participates in mitochondrial genome maintenance, regulation of mitochondrial membrane potential and mitochondrial respiration. The chain is Mitochondrial pyrimidine nucleotide transporter RIM2 (RIM2) from Saccharomyces cerevisiae (strain ATCC 204508 / S288c) (Baker's yeast).